We begin with the raw amino-acid sequence, 285 residues long: HTH-type transcriptional regulator YofA (285 aa).

An HTH lysR-type domain is found at 1 to 58 (MESGDLKIFQAVAREGSITKAAQMLNYVQSNVTARVHNLEEDLNIRLFHRTNRGMKLT). Positions 18 to 37 (ITKAAQMLNYVQSNVTARVH) form a DNA-binding region, H-T-H motif.

It belongs to the LysR transcriptional regulatory family.

It is found in the cytoplasm. Its function is as follows. Regulates expression of the cell division protein ftsW, and is essential for cell viability during stationary phase. The chain is HTH-type transcriptional regulator YofA (yofA) from Bacillus subtilis (strain 168).